The primary structure comprises 216 residues: Somatotropin (216 aa).

An N-terminal signal peptide occupies residues 1-26; that stretch reads MATGSQTSWLLTFTLLCLPWPQEAGA. His45 is a Zn(2+) binding site. Cys78 and Cys189 are disulfide-bonded. Ser131 carries the post-translational modification Phosphoserine. Glu198 contacts Zn(2+). An intrachain disulfide couples Cys206 to Cys214.

The protein belongs to the somatotropin/prolactin family.

Its subcellular location is the secreted. Functionally, plays an important role in growth control. Its major role in stimulating body growth is to stimulate the liver and other tissues to secrete IGF1. It stimulates both the differentiation and proliferation of myoblasts. It also stimulates amino acid uptake and protein synthesis in muscle and other tissues. The chain is Somatotropin (GH1) from Spalax ehrenbergi (Middle East blind mole rat).